The following is a 497-amino-acid chain: SIQHVYGAQHPPFDPLLHGTLLKSTAKMPTTPVKAKRVSTFQEFESNTSDAWDAGEDDDELLAMAAESLNSEVVMETANRVLRNHSQRQGRPTLQEGPGLQQKPRPEAEPPSPPSGDLRLVKSVSESHTSCPAESASDAAPLQRSQSLPHAAAVTLGGTSDPGTLSSSALSEREASRLDKFEQLLAGPNTDLEELRKLSWSGIPKPVRPMTWKLLSGYLPANVDRRPATLQRKQKEYFAFIEHYYDSRNDEVHQDTYRQIHIDIPRMSPEALILQPKVTEIFERILFIWAIRHPASGYVQGINDLVTPFFVVFICEYIEAEEVDTVDVSGVPAEVLRNIEADTYWCMSKLLDGIQDNYTFAQPGIQMKVKMLEELVSRIDEQVHRHLDQHEVRYLQFAFRWMNNLLMREVPLRCTIRLWDTYQSEPEGFSHFHLYVCAAFLVRWRKEILEEKDFQELLLFLQNLPTAHWDDEDISLLLAEAYRLKFAFADAPNHYKK.

Residues 83-147 are disordered; that stretch reads RNHSQRQGRP…DAAPLQRSQS (65 aa). Phosphoserine occurs at positions 112, 125, and 147. Residues 202–426 form the Rab-GAP TBC domain; it reads GIPKPVRPMT…RLWDTYQSEP (225 aa).

Homodimer. Interacts with ACBD3 and ARFGEF1. Interacts with YWHAB, YWHAE, YWHAG, YWHAH, YWHAQ and YWHAZ.

Functionally, may act as a GTPase-activating protein for Rab family protein(s). In Macaca fascicularis (Crab-eating macaque), this protein is TBC1 domain family member 22A (TBC1D22A).